The sequence spans 477 residues: PTS system glucose-specific EIICB component (477 aa).

The Cytoplasmic portion of the chain corresponds to 1–14; sequence MFKNAFANLQKVGK. The region spanning 1–388 is the PTS EIIC type-1 domain; it reads MFKNAFANLQ…LDLKTPGRED (388 aa). The helical transmembrane segment at 15–35 threads the bilayer; it reads SLMLPVSVLPIAGILLGVGSA. Topologically, residues 36–50 are periplasmic; it reads NFSWLPAVVSHVMAE. The helical transmembrane segment at 51-71 threads the bilayer; it reads AGGSVFANMPLIFAIGVALGF. Residues 72–79 lie on the Cytoplasmic side of the membrane; sequence TNNDGVSA. A helical membrane pass occupies residues 80–100; that stretch reads LAAVVAYGIMVKTMAVVAPLV. At 101 to 111 the chain is on the periplasmic side; sequence LHLPAEEIAAK. Residues 112-132 traverse the membrane as a helical segment; the sequence is HLADTGVLGGIISGAIAAYMF. Over 133 to 151 the chain is Cytoplasmic; it reads NRFYRIKLPEYLGFFAGKR. A helical transmembrane segment spans residues 152–172; that stretch reads FVPIISGLAAIFTGVVLSFVW. Residues 173-190 lie on the Periplasmic side of the membrane; that stretch reads PPIGTAIQAFSQWAAYQN. The chain crosses the membrane as a helical span at residues 191–211; that stretch reads PVVAFGIYGFIERCLVPFGLH. Over 212-248 the chain is Cytoplasmic; that stretch reads HIWNVPFQMQIGEYTNAAGQVFHGDIPRYMAGDPTAG. A helical membrane pass occupies residues 249–269; it reads MLSGGFLFKMYGLPAAAIAIW. The Periplasmic segment spans residues 270–279; sequence HSAKPENRAK. Residues 280-300 traverse the membrane as a helical segment; sequence VGGIMISAALTSFLTGITEPI. Residues 301 to 309 are Cytoplasmic-facing; it reads EFSFMFVAP. The helical transmembrane segment at 310-330 threads the bilayer; sequence ILYIIHAILAGLAFPICILLG. The Periplasmic segment spans residues 331–355; that stretch reads MRDGTSFSHGLIDFIVLSGNSSKLW. Residues 356–376 form a helical membrane-spanning segment; that stretch reads LFPIVGAGYAIVYYTVFRVLI. Residues 377-477 are Cytoplasmic-facing; that stretch reads KALDLKTPGR…TEMDEYIRNS (101 aa). In terms of domain architecture, PTS EIIB type-1 spans 399–477; it reads SEMAPALVAA…TEMDEYIRNS (79 aa). Cys-421 serves as the catalytic Phosphocysteine intermediate; for EIIB activity. Residue Cys-421 is modified to Phosphocysteine.

The protein localises to the cell inner membrane. The catalysed reaction is N(pros)-phospho-L-histidyl-[protein] + D-glucose(out) = D-glucose 6-phosphate(in) + L-histidyl-[protein]. In terms of biological role, the phosphoenolpyruvate-dependent sugar phosphotransferase system (sugar PTS), a major carbohydrate active transport system, catalyzes the phosphorylation of incoming sugar substrates concomitantly with their translocation across the cell membrane. The enzyme II complex composed of PtsG and Crr is involved in glucose transport. Also functions as a chemoreceptor monitoring the environment for changes in sugar concentration. It can also phosphorylate mannose, methyl alpha-glucoside and 2-deoxy-glucose. The polypeptide is PTS system glucose-specific EIICB component (ptsG) (Salmonella typhimurium (strain LT2 / SGSC1412 / ATCC 700720)).